A 408-amino-acid polypeptide reads, in one-letter code: MDKLLERFLNYVSLDTQSKAGVRQVPSTEGQWKLLHLLKEQLEEMGLINVTLSEKGTLMATLPANVPGDIPAIGFISHVDTSPDCSGKNVNPQIVENYRGGDIALGIGDEVLSPVMFPVLHQLLGQTLITTDGKTLLGADDKAGIAEIMTALAVLQQKNIPHGDIRVAFTPDEEVGKGAKHFDVDAFDARWAYTVDGGGVGELEFENFNAASVNIKIVGNNVHPGTAKGVMVNALSLAARIHAEVPADESPEMTEGYEGFYHLAGMKGTVERADMHYIIRDFDRKQFEARKCKMMEIAKKVGKGLHPDCYIELVIEDSYYNMREKVVEHPHILDIAQQAMRDCDIEPELKPIRGGTDGAQLSFMGLPCPNLFTGGYNYHGKHEFVTLEGMEKAVQVIVRIAELTAQRK.

Zn(2+) is bound at residue His-78. Asp-80 is a catalytic residue. Asp-140 provides a ligand contact to Zn(2+). Catalysis depends on Glu-173, which acts as the Proton acceptor. Residues Glu-174, Asp-196, and His-379 each contribute to the Zn(2+) site.

Belongs to the peptidase M20B family. It depends on Zn(2+) as a cofactor.

It is found in the cytoplasm. It carries out the reaction Release of the N-terminal residue from a tripeptide.. In terms of biological role, cleaves the N-terminal amino acid of tripeptides. This chain is Peptidase T, found in Shigella boydii serotype 18 (strain CDC 3083-94 / BS512).